We begin with the raw amino-acid sequence, 278 residues long: Tryptophan synthase alpha chain (278 aa).

Residues glutamate 50 and aspartate 61 each act as proton acceptor in the active site.

It belongs to the TrpA family. As to quaternary structure, tetramer of two alpha and two beta chains.

It carries out the reaction (1S,2R)-1-C-(indol-3-yl)glycerol 3-phosphate + L-serine = D-glyceraldehyde 3-phosphate + L-tryptophan + H2O. It functions in the pathway amino-acid biosynthesis; L-tryptophan biosynthesis; L-tryptophan from chorismate: step 5/5. The alpha subunit is responsible for the aldol cleavage of indoleglycerol phosphate to indole and glyceraldehyde 3-phosphate. This chain is Tryptophan synthase alpha chain, found in Nitrobacter winogradskyi (strain ATCC 25391 / DSM 10237 / CIP 104748 / NCIMB 11846 / Nb-255).